We begin with the raw amino-acid sequence, 225 residues long: Deoxyribose-phosphate aldolase (225 aa).

The active-site Proton donor/acceptor is the D94. Residue K158 is the Schiff-base intermediate with acetaldehyde of the active site. K187 (proton donor/acceptor) is an active-site residue.

The protein belongs to the DeoC/FbaB aldolase family. DeoC type 1 subfamily.

It is found in the cytoplasm. It catalyses the reaction 2-deoxy-D-ribose 5-phosphate = D-glyceraldehyde 3-phosphate + acetaldehyde. It participates in carbohydrate degradation; 2-deoxy-D-ribose 1-phosphate degradation; D-glyceraldehyde 3-phosphate and acetaldehyde from 2-deoxy-alpha-D-ribose 1-phosphate: step 2/2. Its function is as follows. Catalyzes a reversible aldol reaction between acetaldehyde and D-glyceraldehyde 3-phosphate to generate 2-deoxy-D-ribose 5-phosphate. This Thermococcus gammatolerans (strain DSM 15229 / JCM 11827 / EJ3) protein is Deoxyribose-phosphate aldolase.